The following is a 338-amino-acid chain: MKVYYDKDADLSLIKKLKVTIVGYGSQGHAHAQNLKDSGVNVTIGARKEGSSFAKAVNAGHEVKEIKEAVTGADVVMVLLPDETMAEIYHAEIEPNLKKGAALAFAHGFNIHYNQIVPSKDLDVIMIAPKGPGHTVRSEYLKGGGVPSLIAVYQDASGKAKDIALSYAAANGGTKGGVIETNFREETETDLFGEQAVLCGGAVELVKAGFETLVEAGYAPEMAYFECLHELKLIVDLMYEGGIANMNYSISNNAEYGEYVTGPRVIADQARAAMKECLKNIQNGDYAKQFILEGRTGYPSMTARRRLNAAHPIEQVGSQLRAMMPWIAKNKLVDQSKN.

The 181-residue stretch at 1–181 folds into the KARI N-terminal Rossmann domain; the sequence is MKVYYDKDAD…GGTKGGVIET (181 aa). NADP(+) is bound by residues 24 to 27, Arg-47, and Ser-52; that span reads YGSQ. His-107 is a catalytic residue. Gly-133 contributes to the NADP(+) binding site. A KARI C-terminal knotted domain is found at 182–327; it reads NFREETETDL…SQLRAMMPWI (146 aa). Residues Asp-190, Glu-194, Glu-226, and Glu-230 each contribute to the Mg(2+) site. Ser-251 is a binding site for substrate.

Belongs to the ketol-acid reductoisomerase family. Mg(2+) is required as a cofactor.

It catalyses the reaction (2R)-2,3-dihydroxy-3-methylbutanoate + NADP(+) = (2S)-2-acetolactate + NADPH + H(+). The enzyme catalyses (2R,3R)-2,3-dihydroxy-3-methylpentanoate + NADP(+) = (S)-2-ethyl-2-hydroxy-3-oxobutanoate + NADPH + H(+). Its pathway is amino-acid biosynthesis; L-isoleucine biosynthesis; L-isoleucine from 2-oxobutanoate: step 2/4. It functions in the pathway amino-acid biosynthesis; L-valine biosynthesis; L-valine from pyruvate: step 2/4. In terms of biological role, involved in the biosynthesis of branched-chain amino acids (BCAA). Catalyzes an alkyl-migration followed by a ketol-acid reduction of (S)-2-acetolactate (S2AL) to yield (R)-2,3-dihydroxy-isovalerate. In the isomerase reaction, S2AL is rearranged via a Mg-dependent methyl migration to produce 3-hydroxy-3-methyl-2-ketobutyrate (HMKB). In the reductase reaction, this 2-ketoacid undergoes a metal-dependent reduction by NADPH to yield (R)-2,3-dihydroxy-isovalerate. This chain is Ketol-acid reductoisomerase (NADP(+)), found in Methylobacillus flagellatus (strain ATCC 51484 / DSM 6875 / VKM B-1610 / KT).